The sequence spans 749 residues: NAD(P)H-quinone oxidoreductase subunit 5, chloroplastic (749 aa).

Transmembrane regions (helical) follow at residues 9–29 (WIIP…LLLF), 40–60 (WSFT…NLSI), 89–109 (IDPL…MVLI), 125–145 (FAYM…SNLI), 147–167 (IYIF…FWFT), 185–205 (GDFG…SFEF), 221–241 (NGTN…GAVA), 260–280 (TPIS…FLVA), 285–305 (LFIV…ITIL), 329–349 (LGYT…FHLI), 356–376 (ALLF…VGYS), 398–418 (NTFL…CFWS), 427–447 (WLYS…TAFY), 553–573 (LFPL…GIPF), 607–627 (FVIN…LASL), and 727–747 (SYLF…YFFL).

This sequence belongs to the complex I subunit 5 family. NDH is composed of at least 16 different subunits, 5 of which are encoded in the nucleus.

The protein resides in the plastid. It localises to the chloroplast thylakoid membrane. The catalysed reaction is a plastoquinone + NADH + (n+1) H(+)(in) = a plastoquinol + NAD(+) + n H(+)(out). It catalyses the reaction a plastoquinone + NADPH + (n+1) H(+)(in) = a plastoquinol + NADP(+) + n H(+)(out). Functionally, NDH shuttles electrons from NAD(P)H:plastoquinone, via FMN and iron-sulfur (Fe-S) centers, to quinones in the photosynthetic chain and possibly in a chloroplast respiratory chain. The immediate electron acceptor for the enzyme in this species is believed to be plastoquinone. Couples the redox reaction to proton translocation, and thus conserves the redox energy in a proton gradient. This is NAD(P)H-quinone oxidoreductase subunit 5, chloroplastic (ndhF) from Vitis vinifera (Grape).